Consider the following 302-residue polypeptide: Oxygen-dependent coproporphyrinogen-III oxidase (302 aa).

Substrate is bound at residue serine 94. A divalent metal cation is bound by residues histidine 98 and histidine 108. Histidine 108 acts as the Proton donor in catalysis. 110 to 112 (NVR) contributes to the substrate binding site. 2 residues coordinate a divalent metal cation: histidine 147 and histidine 177. The important for dimerization stretch occupies residues 242–277 (YVEFNLVFDRGTLFGLQSGGRTESILMSMPPVANWR). 260-262 (GGR) is a substrate binding site.

Belongs to the aerobic coproporphyrinogen-III oxidase family. Homodimer. A divalent metal cation serves as cofactor.

Its subcellular location is the cytoplasm. It carries out the reaction coproporphyrinogen III + O2 + 2 H(+) = protoporphyrinogen IX + 2 CO2 + 2 H2O. Its pathway is porphyrin-containing compound metabolism; protoporphyrin-IX biosynthesis; protoporphyrinogen-IX from coproporphyrinogen-III (O2 route): step 1/1. In terms of biological role, involved in the heme biosynthesis. Catalyzes the aerobic oxidative decarboxylation of propionate groups of rings A and B of coproporphyrinogen-III to yield the vinyl groups in protoporphyrinogen-IX. This chain is Oxygen-dependent coproporphyrinogen-III oxidase, found in Ralstonia nicotianae (strain ATCC BAA-1114 / GMI1000) (Ralstonia solanacearum).